Reading from the N-terminus, the 78-residue chain is Large ribosomal subunit protein bL28 (78 aa).

Residues 1–33 are disordered; sequence MARKDDVTGEGPVTGNSVSDSNQKTNRRFKRNL. Polar residues predominate over residues 14–24; that stretch reads TGNSVSDSNQK.

It belongs to the bacterial ribosomal protein bL28 family.

This chain is Large ribosomal subunit protein bL28, found in Salinibacter ruber (strain DSM 13855 / M31).